Reading from the N-terminus, the 85-residue chain is Alpha-toxin Amm8 (85 aa).

Positions 1-19 are cleaved as a signal peptide; it reads MNYLVMISLALLFMTGVES. The 63-residue stretch at 21–83 folds into the LCN-type CS-alpha/beta domain; it reads KDGYIVNDIN…VRTKGPGRCN (63 aa). 4 disulfides stabilise this stretch: cysteine 31–cysteine 82, cysteine 35–cysteine 55, cysteine 41–cysteine 65, and cysteine 45–cysteine 67. Arginine 85 is a propeptide (removed by a carboxypeptidase).

Belongs to the long (4 C-C) scorpion toxin superfamily. Sodium channel inhibitor family. Alpha subfamily. As to expression, expressed by the venom gland.

It is found in the secreted. In terms of biological role, alpha toxins bind voltage-independently at site-3 of sodium channels (Nav) and inhibit the inactivation of the activated channels, thereby blocking neuronal transmission. The toxin principally slows the inactivation process of TTX-sensitive sodium channels. It discriminates neuronal versus muscular sodium channel, as it is more potent on rat brain Nav1.2/SCN2A (EC(50)=29 nM) than on rat skeletal muscle Nav1.4/SCN4A (EC(50)=416 nM). It also shows a weak activity on Nav1.7/SCN9A (EC(50)=1.76 uM). In vivo, the toxin produces pain hypersensibility to mechanical and thermal stimuli. It also exhibits potent analgesic activity (when injected intraperitoneally), increasing hot plate and tail flick withdrawal latencies in a dose-dependent fashion. This paradoxical analgesic action, is significantly suppressed by opioid receptor antagonists, suggesting a pain-induced analgesia mechanism that involves an endogenous opioid system. This led to hypothesis that pain relief induced by peripheral administration of Amm VIII may result from sensitization of primary afferent neurons and subsequent activation of an opioid-dependent noxious inhibitory control. The polypeptide is Alpha-toxin Amm8 (Androctonus mauritanicus mauritanicus (Scorpion)).